Reading from the N-terminus, the 255-residue chain is tRNA (guanine-N(1)-)-methyltransferase (255 aa).

Residues glycine 113 and 133-138 (IGDYVL) contribute to the S-adenosyl-L-methionine site.

Belongs to the RNA methyltransferase TrmD family. As to quaternary structure, homodimer.

It localises to the cytoplasm. The catalysed reaction is guanosine(37) in tRNA + S-adenosyl-L-methionine = N(1)-methylguanosine(37) in tRNA + S-adenosyl-L-homocysteine + H(+). Functionally, specifically methylates guanosine-37 in various tRNAs. This chain is tRNA (guanine-N(1)-)-methyltransferase, found in Salmonella agona (strain SL483).